The following is a 338-amino-acid chain: uncharacterized protein (338 aa).

Positions 1 to 29 (MIKQLYKNITICTLALSTTFTVLPATSYA) are cleaved as a signal peptide.

It belongs to the aerolysin family.

This is an uncharacterized protein from Staphylococcus aureus (strain MSSA476).